A 1693-amino-acid chain; its full sequence is Latrophilin Cirl (1693 aa).

The Extracellular segment spans residues 1–753; it reads MLPTILSISY…LFTMFDGNMR (753 aa). Positions 25 to 114 constitute an SUEL-type lectin domain; that stretch reads ACEGKKLTIE…KYLEAHYQCI (90 aa). Asn142 is a glycosylation site (N-linked (GlcNAc...) asparagine). Composition is skewed to polar residues over residues 185 to 198 and 256 to 265; these read TAVT…STTA and NVTSPSNTRI. Residues 185–299 are disordered; that stretch reads TAVTHSTPWS…PGTAASGSVA (115 aa). Residue Asn256 is glycosylated (N-linked (GlcNAc...) asparagine). The span at 275 to 299 shows a compositional bias: low complexity; sequence DDGTLLTTKSSPNRPPGTAASGSVA. N-linked (GlcNAc...) asparagine glycans are attached at residues Asn301, Asn340, Asn397, Asn641, Asn689, and Asn716. A disordered region spans residues 375-399; it reads YDEYDDDASSTTPAPSGGDCLHNSS. A GAIN-B domain is found at 564-740; it reads KKSKIYSSVV…AILMDVVDEH (177 aa). Intrachain disulfides connect Cys695–Cys722 and Cys710–Cys724. Residues 695–740 form a GPS region; it reads CVFWNYIDHAWSANGCSLESTNRTHSVCSCNHLTNFAILMDVVDEH. Residues 754 to 774 form a helical membrane-spanning segment; it reads IFIYISIGICVVFIVIALLTL. Topologically, residues 775–787 are cytoplasmic; sequence KLFNGVFVKSART. The helical transmembrane segment at 788-808 threads the bilayer; sequence SIYTSIYLCLLAIELLFLLGI. Residues 809–814 lie on the Extracellular side of the membrane; the sequence is EQTETS. Residues 815-835 traverse the membrane as a helical segment; that stretch reads IFCGFITIFLHCAILSGTAWF. The Cytoplasmic portion of the chain corresponds to 836–861; the sequence is CYEAFHSYSTLTSDELLLEVDQTPKV. Residues 862–882 form a helical membrane-spanning segment; the sequence is NCYYLLSYGLSLSVVAISLVI. Residues 883 to 906 are Extracellular-facing; the sequence is DPSTYTQNDYCVLMEANALFYATF. The chain crosses the membrane as a helical span at residues 907–927; that stretch reads VVPVLVFFVAAIGYTFLSWII. At 928-954 the chain is on the cytoplasmic side; the sequence is MCRKSRTGLKTKEHTRLASVRFDIRCS. The helical transmembrane segment at 955–975 threads the bilayer; the sequence is FVFLLLLSAVWCSAYFYLRGA. Residues 976–985 lie on the Extracellular side of the membrane; sequence KMDDDTADVY. Residues 986–1006 traverse the membrane as a helical segment; sequence GYCFICFNTLLGLYIFVFHCI. At 1007 to 1693 the chain is on the cytoplasmic side; that stretch reads QNEKIRREYR…VRCYLEPLAK (687 aa). Ser1142 bears the Phosphoserine mark. 5 disordered regions span residues 1156–1194, 1220–1247, 1294–1319, 1433–1521, and 1601–1673; these read HKQQ…LKTP, KPNS…LHSR, QQQL…AEQH, GGGS…SDER, and LAVN…QQRH. Phosphoserine is present on residues Ser1239 and Ser1246. The span at 1294-1309 shows a compositional bias: low complexity; it reads QQQLRRQQLHQQQQQL. 2 positions are modified to phosphoserine: Ser1310 and Ser1311. Residues 1439 to 1464 show a composition bias toward low complexity; it reads GGSVSSRSQQQQLKKQQQQQSLAQQR. Composition is skewed to acidic residues over residues 1472–1486 and 1496–1507; these read DDDD…EEAT and CDEDEEEDESDL. The segment covering 1508–1521 has biased composition (basic and acidic residues); it reads EHDAHGLPPQSDER. The segment covering 1630–1655 has biased composition (low complexity); sequence LQKLSPQSTTSSSSHTSHSNPNLHPH. The segment covering 1656–1672 has biased composition (basic residues); that stretch reads QLTHPHPHQHPPHHQQR.

It belongs to the G-protein coupled receptor 2 family. LN-TM7 subfamily. Forms a heterodimer, consisting of a large extracellular region non-covalently linked to a seven-transmembrane moiety. Proteolytically cleaved into 2 subunits, an extracellular subunit and a seven-transmembrane subunit.

The protein localises to the cell membrane. The protein is Latrophilin Cirl of Drosophila sechellia (Fruit fly).